The chain runs to 206 residues: Cytidylate kinase (206 aa).

Gly9–Thr17 is a binding site for ATP.

It belongs to the cytidylate kinase family. Type 1 subfamily.

The protein resides in the cytoplasm. It carries out the reaction CMP + ATP = CDP + ADP. It catalyses the reaction dCMP + ATP = dCDP + ADP. The polypeptide is Cytidylate kinase (Cereibacter sphaeroides (strain ATCC 17023 / DSM 158 / JCM 6121 / CCUG 31486 / LMG 2827 / NBRC 12203 / NCIMB 8253 / ATH 2.4.1.) (Rhodobacter sphaeroides)).